Consider the following 528-residue polypeptide: Aspartic proteinase-like protein 1 (528 aa).

A signal peptide spans 1 to 22 (MVSRSAFLLFCVLFLATEETLA). Residues 100–449 (HYTWIDIGTP…DRENMKLGWS (350 aa)) enclose the Peptidase A1 domain. Residue Asp118 is part of the active site. N-linked (GlcNAc...) asparagine glycans are attached at residues Asn193 and Asn217. Asp333 is an active-site residue. Residues Asn358 and Asn391 are each glycosylated (N-linked (GlcNAc...) asparagine). Residues 451–503 (SKCQEDKIEPPQASPGSTSSPNPLPTDEQQSRGGHAVSPAIAGKTPSKTPSSS) are disordered. Polar residues predominate over residues 464–482 (SPGSTSSPNPLPTDEQQSR). The span at 494–503 (KTPSKTPSSS) shows a compositional bias: low complexity. The GPI-anchor amidated serine moiety is linked to residue Ser503. The propeptide at 504–528 (SSYSFSSIMRLFNSLLLLHWLASLM) is removed in mature form.

The protein belongs to the peptidase A1 family.

It is found in the cell membrane. This chain is Aspartic proteinase-like protein 1, found in Arabidopsis thaliana (Mouse-ear cress).